Consider the following 1139-residue polypeptide: Solute carrier family 12 member 5 (1139 aa).

Disordered regions lie at residues 1–62 (MSRR…KGRE) and 95–116 (PQGS…KPVQ). Residues 1–98 (MSRRFTVTSL…ANYTNLPQGS (98 aa)) lie on the Cytoplasmic side of the membrane. The span at 21–45 (PESRRHSVADPRRLPREDVKGDGNP) shows a compositional bias: basic and acidic residues. Residues 46 to 55 (KESSPFINST) are compositionally biased toward polar residues. Threonine 57 is subject to Phosphothreonine. Basic and acidic residues predominate over residues 98 to 111 (SKEHEEAENNEGGK). Residues 99 to 120 (KEHEEAENNEGGKKKPVQAPRM) traverse the membrane as a discontinuously helical segment. Position 113 (lysine 113) interacts with K(+). The Extracellular portion of the chain corresponds to 121-129 (GTFMGVYLP). A helical transmembrane segment spans residues 130-151 (CLQNIFGVILFLRLTWVVGIAG). Residues 152–174 (IMESFCMVFICCSCTMLTAISMS) are Cytoplasmic-facing. The helical transmembrane segment at 175-203 (AIATNGVVPAGGSYYMISRSLGPEFGGAV) threads the bilayer. Alanine 184 serves as a coordination point for chloride. At 204–229 (GLCFYLGTTFAGAMYILGTIEILLAY) the chain is on the extracellular side. 2 helical membrane-spanning segments follow: residues 230–250 (LFPA…AAML) and 251–276 (NNMR…KYVN). The Extracellular segment spans residues 277–402 (KFALVFLGCV…ERRGMPSVGL (126 aa)). The cysteines at positions 310 and 325 are disulfide-linked. Asparagine 314, asparagine 333, asparagine 351, and asparagine 362 each carry an N-linked (GlcNAc...) asparagine glycan. The cysteines at positions 345 and 354 are disulfide-linked. Residues 403 to 420 (ADGTPVDMDHPYVFSDMT) traverse the membrane as a helical segment. Methionine 410 lines the K(+) pocket. Chloride contacts are provided by tyrosine 414 and valine 415. At 421 to 429 (SYFTLLVGI) the chain is on the cytoplasmic side. A helical transmembrane segment spans residues 430–453 (YFPSVTGIMAGSNRSGDLRDAQKS). K(+) is bound at residue aspartate 446. Over 454–485 (IPTGTILAIATTSAVYISSVVLFGACIEGVVL) the chain is Extracellular. A helical transmembrane segment spans residues 486–513 (RDKFGEAVNGNLVVGTLAWPSPWVIVIG). Residues 514-534 (SFFSTCGAGLQSLTGAPRLLQ) are Cytoplasmic-facing. 2 consecutive transmembrane segments (helical) span residues 535–555 (AISR…KANG) and 556–578 (EPTW…ASLD). Glutamate 569 serves as a coordination point for chloride. At 579–592 (EVAPILSMFFLMCY) the chain is on the cytoplasmic side. 2 helical membrane passes run 593 to 615 (MFVN…PRFR) and 616 to 632 (YYHW…CLAL). Residues 633–1139 (MFICSWYYAL…GGREVITIYS (507 aa)) are Cytoplasmic-facing. Residues 667–681 (GIRGLSLSAARYALL) form a scissor helix region. A Phosphothreonine; by OXSR1 and STK39 modification is found at threonine 929. The segment at 943–1025 (HLTKNERERE…PEGEGETDPE (83 aa)) is disordered. The segment covering 945 to 962 (TKNEREREIQSITDESRG) has biased composition (basic and acidic residues). Residues 982–994 (TACDNEEKPEEEV) are compositionally biased toward acidic residues. Residues 1003 to 1012 (PSCPSSSPSP) are compositionally biased toward low complexity. Threonine 1030 is modified (phosphothreonine; by OXSR1 and STK39). Residues 1033–1052 (KDKSAAQKNKGPSPVSSEGI) are disordered. Phosphoserine occurs at positions 1045, 1048, and 1049.

It belongs to the SLC12A transporter family. K/Cl co-transporter subfamily. As to quaternary structure, homodimer; adopts a domain-swap conformation at the scissor helices connecting the transmembrane domain and C-terminal domain. Heterodimer wHeterodimer with K-Cl cotransporters SLC12A6 and SLC12A7. Interacts with AP2A1. In terms of processing, phosphorylated at Thr-929 and Thr-1030 by OXSR1/OSR1 and STK39/SPAK downstream of WNK kinases (WNK1, WNK2, WNK3 or WNK4), inhibiting the potassium-chloride cotransport activity. As to expression, highly expressed in brain. Not detected in other tissues. Highly expressed in pyramidal neurons and in neurons throughout the cortex, hippocampus, the granular layer of the cerebellum and in groups of neurons throughout the brainstem. Barely detectable in dorsal-root ganglions.

It localises to the cell membrane. The protein localises to the cell projection. The protein resides in the dendrite. The enzyme catalyses K(+)(in) + chloride(in) = K(+)(out) + chloride(out). Inhibited following phosphorylation by OXSR1/OSR1 and STK39/SPAK: phosphorylation takes place downstream of WNK kinases (WNK1, WNK2, WNK3 or WNK4) in response to hyperosmotic stress and subsequent cell shrinkage. In terms of biological role, mediates electroneutral potassium-chloride cotransport in mature neurons and is required for neuronal Cl(-) homeostasis. As major extruder of intracellular chloride, it establishes the low neuronal Cl(-) levels required for chloride influx after binding of GABA-A and glycine to their receptors, with subsequent hyperpolarization and neuronal inhibition. Involved in the regulation of dendritic spine formation and maturation. This chain is Solute carrier family 12 member 5 (Slc12a5), found in Rattus norvegicus (Rat).